Consider the following 1025-residue polypeptide: Rho GTPase-activating protein Graf (1025 aa).

One can recognise a PH domain in the interval 271–388; that stretch reads IFTKRGYLFL…WISAMDGTEP (118 aa). The 188-residue stretch at 402–589 folds into the Rho-GAP domain; the sequence is YHLDEAGFMF…ILIDNYERIF (188 aa). A disordered region spans residues 824–866; sequence GSASGPQQHPPVQRGLHSYGQTKHYSPLMPTSTSSSNDSVCDS. A compositionally biased stretch (low complexity) spans 854-866; sequence TSTSSSNDSVCDS. Residues 963–1023 enclose the SH3 domain; the sequence is TGTARVRTLY…PENYVEHLKP (61 aa).

As to quaternary structure, interacts with Egfr (when ubiquitinated). In terms of tissue distribution, in the adult brain, expressed in the antennal lobe, the subesophageal ganglion and the alpha/beta neurons of the mushroom body.

Its subcellular location is the cytoplasm. It localises to the cytosol. It is found in the cytoplasmic vesicle. Its function is as follows. GTPase-activating protein for Rho family proteins. Essential component of the CLIC (clathrin-independent carrier)/GEEC (GPI-anchored protein-enriched early endocytic compartment) endocytic pathway. During hematopoiesis, inhibits Egfr-ras-MAPK signaling by promoting Spi-induced Egfr internalization through CLIC/GEEC endocytosis, thereby preventing plasmatocyte overproliferation. Essential for normal mushroom body (MB) development and consequently the formation of olfactory long-term memories. During MD development, required to stop the MB beta-lobe from crossing the brain midline, possibly acting via its role in the CLIC/GEEC endocytic pathway to down-regulate the Egfr-ras-MAPK signaling at the tip of the beta-lobes. Required during embryo cellularization for maintaining and regulating the rate of actomyosin ring constriction. During cellularization, inhibits Rho-GTP levels at the furrow canal tip in a spatiotemporal manner, thus delaying the onset of actomyosin contraction and ensuring appropriate closure of the cells at the base of nuclei after membrane extension. This Drosophila melanogaster (Fruit fly) protein is Rho GTPase-activating protein Graf.